Reading from the N-terminus, the 95-residue chain is Ferredoxin-4 (95 aa).

Positions 2-95 (DKATLTFTDV…LGGAVKVRPA (94 aa)) constitute a 2Fe-2S ferredoxin-type domain. C38, C43, C46, and C81 together coordinate [2Fe-2S] cluster.

Belongs to the 2Fe2S plant-type ferredoxin family. [2Fe-2S] cluster serves as cofactor.

In terms of biological role, ferredoxins are iron-sulfur proteins that transfer electrons in a wide variety of metabolic reactions. This ferredoxin is required for nitrogen fixation. In Rhodobacter capsulatus (Rhodopseudomonas capsulata), this protein is Ferredoxin-4 (fdxC).